Here is a 320-residue protein sequence, read N- to C-terminus: Olfactory receptor 2C3 (320 aa).

Residues 1-26 (MMEIANVSSPEVFVLLGFSTRPSLET) are Extracellular-facing. The N-linked (GlcNAc...) asparagine glycan is linked to Asn-6. A helical membrane pass occupies residues 27–50 (VLFIVVLSFYMVSILGNGIIILVS). The Cytoplasmic segment spans residues 51 to 58 (HTDVHLHT). The helical transmembrane segment at 59–80 (PMYFFLANLPFLDMSFTTSIVP) threads the bilayer. At 81–101 (QLLANLWGPQKTISYGGCVVQ) the chain is on the extracellular side. Cys-98 and Cys-190 are oxidised to a cystine. A helical membrane pass occupies residues 102–121 (FYISHWLGATECVLLATMSY). Residues 122–140 (DRYAAICRPLHYTVIMHPQ) are Cytoplasmic-facing. A helical transmembrane segment spans residues 141–159 (LCLGLALASWLGGLTTSMV). Residues 160–196 (GSTLTMLLPLCGNNCIDHFFCEMPLIMQLACVDTSLN) are Extracellular-facing. Residues 197 to 220 (EMEMYLASFVFVVLPLGLILVSYG) traverse the membrane as a helical segment. Residues 221–237 (HIARAVLKIRSAEGRRK) lie on the Cytoplasmic side of the membrane. Residues 238–260 (AFNTCSSHVAVVSLFYGSIIFMY) form a helical membrane-spanning segment. Over 261-273 (LQPAKSTSHEQGK) the chain is Extracellular. The helical transmembrane segment at 274–293 (FIALFYTVVTPALNPLIYTL) threads the bilayer. Over 294–320 (RNTEVKSALRHMVLENCCGSAGKLAQI) the chain is Cytoplasmic.

It belongs to the G-protein coupled receptor 1 family.

It is found in the cell membrane. Odorant receptor. The sequence is that of Olfactory receptor 2C3 (OR2C3) from Homo sapiens (Human).